The chain runs to 200 residues: Small ribosomal subunit protein uS4 (200 aa).

The segment at 22–43 (TGKELERRPYAPGQHGPTQRKK) is disordered. Residues 92 to 170 (QRLDNIVYRL…VPEYVTFDAE (79 aa)) enclose the S4 RNA-binding domain.

It belongs to the universal ribosomal protein uS4 family. In terms of assembly, part of the 30S ribosomal subunit. Contacts protein S5. The interaction surface between S4 and S5 is involved in control of translational fidelity.

One of the primary rRNA binding proteins, it binds directly to 16S rRNA where it nucleates assembly of the body of the 30S subunit. Functionally, with S5 and S12 plays an important role in translational accuracy. The sequence is that of Small ribosomal subunit protein uS4 from Listeria monocytogenes serovar 1/2a (strain ATCC BAA-679 / EGD-e).